The chain runs to 253 residues: uncharacterized protein (253 aa).

NADP(+)-binding residues include Ile-17, Ser-36, Asp-62, Asn-89, Lys-123, Tyr-158, Lys-162, Val-191, and Thr-193. Residue Tyr-158 is the Proton acceptor of the active site. The active-site Lowers pKa of active site Tyr is Lys-162.

This sequence belongs to the short-chain dehydrogenases/reductases (SDR) family.

Its subcellular location is the cytoplasm. It is found in the nucleus. This is an uncharacterized protein from Schizosaccharomyces pombe (strain 972 / ATCC 24843) (Fission yeast).